The following is a 578-amino-acid chain: Asparagine synthetase [glutamine-hydrolyzing] 2 (578 aa).

C2 (for GATase activity) is an active-site residue. Positions 2 to 185 constitute a Glutamine amidotransferase type-2 domain; sequence CGILAVLGCI…PGHIYSSKQG (184 aa). L-glutamine contacts are provided by residues 50–54, 75–77, and D98; these read RLAII and NGE. Residues 210 to 450 form the Asparagine synthetase domain; the sequence is LRNAFEKAVI…LPKHILYRQK (241 aa). ATP is bound by residues L231, I267, and 341–342; that span reads SG.

In terms of tissue distribution, expressed in the vascular region adjacent to leaf mesophyll cells in the companion cell-sieve tube element complex.

It catalyses the reaction L-aspartate + L-glutamine + ATP + H2O = L-asparagine + L-glutamate + AMP + diphosphate + H(+). It participates in amino-acid biosynthesis; L-asparagine biosynthesis. Essential for nitrogen assimilation, distribution and remobilization within the plant via the phloem. The chain is Asparagine synthetase [glutamine-hydrolyzing] 2 (ASN2) from Arabidopsis thaliana (Mouse-ear cress).